The chain runs to 718 residues: DNA ligase (718 aa).

NAD(+) contacts are provided by residues 34-38 (DAEYD), 83-84 (SL), and Glu-115. Lys-117 functions as the N6-AMP-lysine intermediate in the catalytic mechanism. Arg-138, Glu-186, Lys-302, and Lys-326 together coordinate NAD(+). Zn(2+)-binding residues include Cys-420, Cys-423, Cys-438, and Cys-444. Residues 604 to 694 (PKGDALAGKT…DRSAPAASNN (91 aa)) enclose the BRCT domain.

The protein belongs to the NAD-dependent DNA ligase family. LigA subfamily. Requires Mg(2+) as cofactor. Mn(2+) is required as a cofactor.

The enzyme catalyses NAD(+) + (deoxyribonucleotide)n-3'-hydroxyl + 5'-phospho-(deoxyribonucleotide)m = (deoxyribonucleotide)n+m + AMP + beta-nicotinamide D-nucleotide.. Functionally, DNA ligase that catalyzes the formation of phosphodiester linkages between 5'-phosphoryl and 3'-hydroxyl groups in double-stranded DNA using NAD as a coenzyme and as the energy source for the reaction. It is essential for DNA replication and repair of damaged DNA. The protein is DNA ligase of Roseiflexus castenholzii (strain DSM 13941 / HLO8).